Reading from the N-terminus, the 69-residue chain is Lantibiotic lichenicidin A2 (69 aa).

Residues 1–37 (MKNSAAREAFKGANHPAGMVSEEELKALVGGNDVNPE) constitute a propeptide that is removed on maturation. T38 carries the 2-oxobutanoic acid modification. A (Z)-2,3-didehydrobutyrine mark is found at T39, T42, and T43. A cross-link (lanthionine (Ser-Cys)) is located at residues 44 to 48 (SSWTC). S45 carries the 2,3-didehydroalanine (Ser) modification. T50 and T54 each carry (Z)-2,3-didehydrobutyrine. The segment at residues 56–60 (SASLC) is a cross-link (lanthionine (Ser-Cys)). Cross-links (beta-methyllanthionine (Thr-Cys)) lie at residues 62 to 65 (TTKC) and 66 to 69 (TSRC). The residue at position 63 (T63) is a (Z)-2,3-didehydrobutyrine.

Post-translationally, maturation of lantibiotics involves the enzymatic conversion of Thr, and Ser into dehydrated AA and the formation of thioether bonds with cysteine. This is followed by membrane translocation and cleavage of the modified precursor.

The protein localises to the secreted. It localises to the cell wall. Its function is as follows. Lanthionine-containing peptide antibiotic (lantibiotic) active on Gram-positive bacteria. The bactericidal activity of lantibiotics is based on depolarization of energized bacterial cytoplasmic membranes, initiated by the formation of aqueous transmembrane pores. When present individually, LchA2 exhibits activity towards L.lactis HP. When combined with LchA1, it displays activity towards a broad spectrum of non-pathogenic and pathogenic Gram-positive bacteria including strains of L.monocytogenes, methicillin-resistant S.aureus, S.pneumoniae and strains of vancomycin-resistant enterococci, but not towards E.faecium L4001 and BM4147-1. Combined LchA1 and LchA2 peptides also inhibit Bacillus sp. HIL-Y85/54728, L.lactis DPC3417 and B.halodurans C-125, which produce lantibiotics themselves. Inactivated by proteinase K and pronase E, but not by trypsin and chymotrypsin. This Bacillus licheniformis (strain ATCC 14580 / DSM 13 / JCM 2505 / CCUG 7422 / NBRC 12200 / NCIMB 9375 / NCTC 10341 / NRRL NRS-1264 / Gibson 46) protein is Lantibiotic lichenicidin A2.